Consider the following 361-residue polypeptide: UDP-N-acetylglucosamine--N-acetylmuramyl-(pentapeptide) pyrophosphoryl-undecaprenol N-acetylglucosamine transferase (361 aa).

UDP-N-acetyl-alpha-D-glucosamine contacts are provided by residues 13-15 (TGG), asparagine 125, arginine 167, serine 196, isoleucine 251, 270-275 (ALTVTE), and glutamine 296.

This sequence belongs to the glycosyltransferase 28 family. MurG subfamily.

It is found in the cell inner membrane. It catalyses the reaction di-trans,octa-cis-undecaprenyl diphospho-N-acetyl-alpha-D-muramoyl-L-alanyl-D-glutamyl-meso-2,6-diaminopimeloyl-D-alanyl-D-alanine + UDP-N-acetyl-alpha-D-glucosamine = di-trans,octa-cis-undecaprenyl diphospho-[N-acetyl-alpha-D-glucosaminyl-(1-&gt;4)]-N-acetyl-alpha-D-muramoyl-L-alanyl-D-glutamyl-meso-2,6-diaminopimeloyl-D-alanyl-D-alanine + UDP + H(+). It participates in cell wall biogenesis; peptidoglycan biosynthesis. Its function is as follows. Cell wall formation. Catalyzes the transfer of a GlcNAc subunit on undecaprenyl-pyrophosphoryl-MurNAc-pentapeptide (lipid intermediate I) to form undecaprenyl-pyrophosphoryl-MurNAc-(pentapeptide)GlcNAc (lipid intermediate II). This chain is UDP-N-acetylglucosamine--N-acetylmuramyl-(pentapeptide) pyrophosphoryl-undecaprenol N-acetylglucosamine transferase, found in Psychrobacter cryohalolentis (strain ATCC BAA-1226 / DSM 17306 / VKM B-2378 / K5).